A 662-amino-acid polypeptide reads, in one-letter code: Chaperone protein dnaK1 (662 aa).

Residue Thr198 is modified to Phosphothreonine; by autocatalysis. The disordered stretch occupies residues 630–662; it reads DWDDDPWAAPSGPPRGRSLNRRDRDPWDDDFYR. Basic and acidic residues predominate over residues 649-662; that stretch reads NRRDRDPWDDDFYR.

This sequence belongs to the heat shock protein 70 family.

Its function is as follows. Acts as a chaperone. The polypeptide is Chaperone protein dnaK1 (dnaK1) (Parasynechococcus marenigrum (strain WH8102)).